The following is a 770-amino-acid chain: Proprotein convertase subtilisin/kexin type 7 (770 aa).

The N-terminal stretch at 1 to 36 is a signal peptide; that stretch reads MPKGRQKVPHLDAHLGLPICLWLELAIFFLVPQVMG. The propeptide occupies 37–140; that stretch reads LSEAGGLDIL…EQTLLKRAKR (104 aa). Residues 141–666 lie on the Extracellular side of the membrane; sequence SIHFNDPKYP…YTITPNTLKT (526 aa). A Peptidase S8 domain is found at 152 to 472; the sequence is QWHLNNRRSP…FGLLNAWRLV (321 aa). N-linked (GlcNAc...) asparagine glycosylation is found at N166 and N174. The active-site Charge relay system is D186. The tract at residues 195-228 is disordered; sequence DIAPNYSPEGSYDLNSNDPDPMPHPDEENGNHHG. Basic and acidic residues predominate over residues 215–225; the sequence is PMPHPDEENGN. H227 acts as the Charge relay system in catalysis. N240 carries an N-linked (GlcNAc...) asparagine glycan. The Charge relay system role is filled by S405. The 138-residue stretch at 480–617 folds into the P/Homo B domain; that stretch reads SVPYLASYVS…QLTLYGSMWS (138 aa). A glycan (N-linked (GlcNAc...) asparagine) is linked at N510. A helical transmembrane segment spans residues 667-687; it reads LVLVGCFSVFWTIYYMLEVCL. At 688–770 the chain is on the cytoplasmic side; sequence SQRNKASTHG…LLQGKSGQIC (83 aa).

It belongs to the peptidase S8 family. The cofactor is Ca(2+). In terms of tissue distribution, widely expressed. Expressed in brain, lung, muscle, heart, liver, kidney, spleen and thymus.

The protein localises to the golgi apparatus. Its subcellular location is the trans-Golgi network membrane. Its activity is regulated as follows. Inhibited by zinc and copper. Its function is as follows. Serine endoprotease that processes various proproteins by cleavage at paired basic amino acids, recognizing the RXXX[KR]R consensus motif. Likely functions in the constitutive secretory pathway. This Mus musculus (Mouse) protein is Proprotein convertase subtilisin/kexin type 7 (Pcsk7).